A 312-amino-acid polypeptide reads, in one-letter code: Aspartoacylase (312 aa).

Residues His20 and Glu23 each coordinate Zn(2+). N-acetyl-L-aspartate-binding residues include Arg62, Asn69, and Arg70. A Zn(2+)-binding site is contributed by His115. N-acetyl-L-aspartate-binding residues include Tyr163 and Arg167. The Proton donor/acceptor role is filled by Glu177. Tyr287 lines the N-acetyl-L-aspartate pocket.

Belongs to the AspA/AstE family. Aspartoacylase subfamily. Homodimer. It depends on Zn(2+) as a cofactor.

It localises to the cytoplasm. The protein localises to the nucleus. It catalyses the reaction an N-acyl-L-aspartate + H2O = a carboxylate + L-aspartate. The enzyme catalyses N-acetyl-L-aspartate + H2O = L-aspartate + acetate. Functionally, catalyzes the deacetylation of N-acetylaspartic acid (NAA) to produce acetate and L-aspartate. NAA occurs in high concentration in brain and its hydrolysis NAA plays a significant part in the maintenance of intact white matter. In other tissues it acts as a scavenger of NAA from body fluids. The sequence is that of Aspartoacylase from Mus musculus (Mouse).